Here is a 74-residue protein sequence, read N- to C-terminus: MNSSIAILLVMALIMFSLDKSYSTDDESGNKCAKTKRRENVCRVCGNRSGNDEYYSECCESDYRYHRCLDLLRN.

An N-terminal signal peptide occupies residues 1-23 (MNSSIAILLVMALIMFSLDKSYS). 3 cysteine pairs are disulfide-bonded: cysteine 32-cysteine 59, cysteine 42-cysteine 58, and cysteine 45-cysteine 68.

This sequence belongs to the scoloptoxin-03 family. In terms of tissue distribution, expressed by the venom gland.

Its subcellular location is the secreted. This toxin inhibits voltage-gated potassium channel currents in DRG neurons (IC(50)=44.2 nM). In vivo, insects injected with this toxin showed signs of neurotoxicity including twitching, paralysis, and body contraction. In Scolopendra mutilans (Chinese red-headed centipede), this protein is Kappa-scoloptoxin(03)-Ssm1a.